Reading from the N-terminus, the 539-residue chain is Protein peanut (539 aa).

A phosphoserine mark is found at S6 and S13. The interval 29 to 90 (LRDKQQAASA…GASNGDSNKL (62 aa)) is disordered. The span at 35 to 54 (AASASASSATNGSSGSESLV) shows a compositional bias: low complexity. Residues 139 to 411 (RGFEFTLMVV…ENYRCRKLSE (273 aa)) form the Septin-type G domain. Positions 149–156 (GASGLGKS) are G1 motif. Residues 149-156 (GASGLGKS), T183, G209, 288-296 (KADTMTPDE), G345, and R360 each bind GTP. Residues 206-209 (DTPG) are G3 motif. The tract at residues 287-290 (AKAD) is G4 motif. Residues 420–516 (RLSNKNPLTQ…HVTLEELKRR (97 aa)) are a coiled coil. The tract at residues 513–539 (LKRRSLGANSSTDNVDGKKEKKKKGLF) is disordered. S517 carries the post-translational modification Phosphoserine.

It belongs to the TRAFAC class TrmE-Era-EngA-EngB-Septin-like GTPase superfamily. Septin GTPase family. As to quaternary structure, likely part of a multicomponent septin complex that includes Septin1. Interacts with Septin1. Interacts with hil. Interacts with park. Post-translationally, ubiquitinated by park, leading to its degradation by the proteasome. Accumulates at the leading edge of the cleavage furrow in dividing cells and cellularizing embryos (at protein level).

It localises to the apical cell membrane. The protein resides in the cleavage furrow. Its subcellular location is the cytoplasm. It is found in the cell cortex. Involved in cytokinesis and possibly cellularization. Also acts as an enhancer of the sina gene, thus having a role in photoreceptor development. May be involved in p53-dependent apoptosis. The sequence is that of Protein peanut (pnut) from Drosophila melanogaster (Fruit fly).